Here is an 82-residue protein sequence, read N- to C-terminus: MKLTCALIVAMLLLTACQLITTDDFRGRQQYRTARSRTKMQNYKIFRLTKRCDAPNAPCEKFDNDCCDACMLREKQQPICAV.

Positions 1 to 22 (MKLTCALIVAMLLLTACQLITT) are cleaved as a signal peptide. Residues 23–49 (DDFRGRQQYRTARSRTKMQNYKIFRLT) constitute a propeptide that is removed on maturation. Disulfide bonds link Cys-52–Cys-67, Cys-59–Cys-70, and Cys-66–Cys-80.

The protein belongs to the conotoxin O1 superfamily. Expressed by the venom duct.

It localises to the secreted. The polypeptide is Conotoxin MiK42 (Conus miles (Soldier cone)).